The sequence spans 239 residues: Transcriptional regulatory protein DcuR (239 aa).

The region spanning 3 to 121 (NVLIIDDDAM…RFEEALTGWR (119 aa)) is the Response regulatory domain. At Asp56 the chain carries 4-aspartylphosphate. Positions 181–200 (TDELANEVNISRVSCRKYLI) form a DNA-binding region, H-T-H motif.

Post-translationally, phosphorylated and activated by DcuS.

The protein localises to the cytoplasm. Functionally, member of the two-component regulatory system DcuR/DcuS. Involved in the C4-dicarboxylate-stimulated regulation of the genes encoding the anaerobic fumarate respiratory system (frdABCD; nuoAN; dcuB; dcuC; sdhCDAB; etc.). Weakly regulates the aerobic C4-dicarboxylate transporter dctA. In Shigella flexneri, this protein is Transcriptional regulatory protein DcuR (dcuR).